The sequence spans 118 residues: UPF0449 protein C19orf25 (118 aa).

Tyrosine 63 carries the post-translational modification Phosphotyrosine. Residues 81 to 109 (NVLRQRCELLQRAGEDLEREVAQMKQAAL) adopt a coiled-coil conformation.

This sequence belongs to the UPF0449 family.

This chain is UPF0449 protein C19orf25 (C19orf25), found in Homo sapiens (Human).